The following is a 99-amino-acid chain: MVRKLSEEEVKRELENLEGWEFCKDYIQKEFSTKNWKTTIFVVNAIASLAEAQWHHPDLEVSFKKVKVKLTTHEAGGITERDIKLAKSIDELVKEILKH.

Belongs to the pterin-4-alpha-carbinolamine dehydratase family.

The catalysed reaction is (4aS,6R)-4a-hydroxy-L-erythro-5,6,7,8-tetrahydrobiopterin = (6R)-L-erythro-6,7-dihydrobiopterin + H2O. The protein is Putative pterin-4-alpha-carbinolamine dehydratase of Aquifex aeolicus (strain VF5).